A 371-amino-acid chain; its full sequence is Aminomethyltransferase (371 aa).

This sequence belongs to the GcvT family. The glycine cleavage system is composed of four proteins: P, T, L and H.

The catalysed reaction is N(6)-[(R)-S(8)-aminomethyldihydrolipoyl]-L-lysyl-[protein] + (6S)-5,6,7,8-tetrahydrofolate = N(6)-[(R)-dihydrolipoyl]-L-lysyl-[protein] + (6R)-5,10-methylene-5,6,7,8-tetrahydrofolate + NH4(+). The glycine cleavage system catalyzes the degradation of glycine. This chain is Aminomethyltransferase, found in Cellvibrio japonicus (strain Ueda107) (Pseudomonas fluorescens subsp. cellulosa).